The chain runs to 245 residues: MLIIPAIDLKDGACVRLRQGRMEDSTVFSDDPVSMAAKWVEGGCRRLHLVDLNGAFEGQPVNGEVVTAIAKRYPTLPIQIGGGIRSLETIEHYVKAGVSYVIIGTKAVKDPAFVAEACRAFPGKIIVGLDAKDGFVATDGWAEISTVQVIDLAKQFEADGVSSIVYTDIAKDGMMQGCNVPFTAALAAATKIPVIASGGIHNLGDIKSLLDAKVPGIIGAITGRAIYEGTLDVAEAQAFCDSYQG.

The active-site Proton acceptor is the aspartate 8. Aspartate 130 functions as the Proton donor in the catalytic mechanism.

It belongs to the HisA/HisF family.

It localises to the cytoplasm. It catalyses the reaction 1-(5-phospho-beta-D-ribosyl)-5-[(5-phospho-beta-D-ribosylamino)methylideneamino]imidazole-4-carboxamide = 5-[(5-phospho-1-deoxy-D-ribulos-1-ylimino)methylamino]-1-(5-phospho-beta-D-ribosyl)imidazole-4-carboxamide. It functions in the pathway amino-acid biosynthesis; L-histidine biosynthesis; L-histidine from 5-phospho-alpha-D-ribose 1-diphosphate: step 4/9. This Pseudomonas fluorescens (strain Pf0-1) protein is 1-(5-phosphoribosyl)-5-[(5-phosphoribosylamino)methylideneamino] imidazole-4-carboxamide isomerase.